A 295-amino-acid polypeptide reads, in one-letter code: Probable endonuclease lcl3 (295 aa).

The tract at residues 1-35 is disordered; that stretch reads MRWPPWASDSQAQQQTAKHDEHDERQAAAKSTTTS. A compositionally biased stretch (basic and acidic residues) spans 17–27; the sequence is AKHDEHDERQA. A helical membrane pass occupies residues 52 to 74; that stretch reads FTEARTIIPTLILTSGFLGAFYI. In terms of domain architecture, TNase-like spans 96–263; the sequence is RSLLGQVTSV…KLRGVGLWKD (168 aa). R147 is an active-site residue. Residue D152 participates in Ca(2+) binding. Active-site residues include E155 and R195.

This sequence belongs to the LCL3 family.

It localises to the mitochondrion. It is found in the membrane. This is Probable endonuclease lcl3 (lcl3) from Neosartorya fischeri (strain ATCC 1020 / DSM 3700 / CBS 544.65 / FGSC A1164 / JCM 1740 / NRRL 181 / WB 181) (Aspergillus fischerianus).